The primary structure comprises 211 residues: Imidazole glycerol phosphate synthase subunit HisH (211 aa).

Residues 3–211 (VIAVIDYDMG…VNQIRVKAIA (209 aa)) enclose the Glutamine amidotransferase type-1 domain. Catalysis depends on Cys81, which acts as the Nucleophile. Catalysis depends on residues His186 and Glu188.

As to quaternary structure, heterodimer of HisH and HisF.

The protein resides in the cytoplasm. The enzyme catalyses 5-[(5-phospho-1-deoxy-D-ribulos-1-ylimino)methylamino]-1-(5-phospho-beta-D-ribosyl)imidazole-4-carboxamide + L-glutamine = D-erythro-1-(imidazol-4-yl)glycerol 3-phosphate + 5-amino-1-(5-phospho-beta-D-ribosyl)imidazole-4-carboxamide + L-glutamate + H(+). The catalysed reaction is L-glutamine + H2O = L-glutamate + NH4(+). The protein operates within amino-acid biosynthesis; L-histidine biosynthesis; L-histidine from 5-phospho-alpha-D-ribose 1-diphosphate: step 5/9. Functionally, IGPS catalyzes the conversion of PRFAR and glutamine to IGP, AICAR and glutamate. The HisH subunit catalyzes the hydrolysis of glutamine to glutamate and ammonia as part of the synthesis of IGP and AICAR. The resulting ammonia molecule is channeled to the active site of HisF. The protein is Imidazole glycerol phosphate synthase subunit HisH of Gloeothece citriformis (strain PCC 7424) (Cyanothece sp. (strain PCC 7424)).